A 428-amino-acid chain; its full sequence is Serine--tRNA ligase (428 aa).

231 to 233 (TSE) serves as a coordination point for L-serine. Residues 262–264 (RRE) and Val-278 contribute to the ATP site. Glu-285 is a binding site for L-serine. Position 349-352 (349-352 (ELTS)) interacts with ATP. Thr-384 provides a ligand contact to L-serine.

Belongs to the class-II aminoacyl-tRNA synthetase family. Type-1 seryl-tRNA synthetase subfamily. In terms of assembly, homodimer. The tRNA molecule binds across the dimer.

The protein resides in the cytoplasm. The enzyme catalyses tRNA(Ser) + L-serine + ATP = L-seryl-tRNA(Ser) + AMP + diphosphate + H(+). It catalyses the reaction tRNA(Sec) + L-serine + ATP = L-seryl-tRNA(Sec) + AMP + diphosphate + H(+). Its pathway is aminoacyl-tRNA biosynthesis; selenocysteinyl-tRNA(Sec) biosynthesis; L-seryl-tRNA(Sec) from L-serine and tRNA(Sec): step 1/1. Catalyzes the attachment of serine to tRNA(Ser). Is also able to aminoacylate tRNA(Sec) with serine, to form the misacylated tRNA L-seryl-tRNA(Sec), which will be further converted into selenocysteinyl-tRNA(Sec). The sequence is that of Serine--tRNA ligase from Bifidobacterium longum (strain NCC 2705).